Here is a 171-residue protein sequence, read N- to C-terminus: Co-chaperone protein HscB homolog (171 aa).

Residues 2–74 enclose the J domain; that stretch reads NYFELFGLPI…LRRAEYLLSL (73 aa).

It belongs to the HscB family. As to quaternary structure, interacts with HscA and stimulates its ATPase activity.

In terms of biological role, co-chaperone involved in the maturation of iron-sulfur cluster-containing proteins. Seems to help targeting proteins to be folded toward HscA. In Vibrio cholerae serotype O1 (strain ATCC 39541 / Classical Ogawa 395 / O395), this protein is Co-chaperone protein HscB homolog.